Consider the following 359-residue polypeptide: Phosphoserine aminotransferase (359 aa).

Residue Arg-41 coordinates L-glutamate. Residues 75-76, Trp-101, Thr-152, Asp-171, and Gln-194 contribute to the pyridoxal 5'-phosphate site; that span reads AS. An N6-(pyridoxal phosphate)lysine modification is found at Lys-195. 236–237 lines the pyridoxal 5'-phosphate pocket; that stretch reads NT.

It belongs to the class-V pyridoxal-phosphate-dependent aminotransferase family. SerC subfamily. As to quaternary structure, homodimer. The cofactor is pyridoxal 5'-phosphate.

The protein localises to the cytoplasm. It catalyses the reaction O-phospho-L-serine + 2-oxoglutarate = 3-phosphooxypyruvate + L-glutamate. The enzyme catalyses 4-(phosphooxy)-L-threonine + 2-oxoglutarate = (R)-3-hydroxy-2-oxo-4-phosphooxybutanoate + L-glutamate. It functions in the pathway amino-acid biosynthesis; L-serine biosynthesis; L-serine from 3-phospho-D-glycerate: step 2/3. Its pathway is cofactor biosynthesis; pyridoxine 5'-phosphate biosynthesis; pyridoxine 5'-phosphate from D-erythrose 4-phosphate: step 3/5. Functionally, catalyzes the reversible conversion of 3-phosphohydroxypyruvate to phosphoserine and of 3-hydroxy-2-oxo-4-phosphonooxybutanoate to phosphohydroxythreonine. This chain is Phosphoserine aminotransferase, found in Acinetobacter baumannii (strain AB307-0294).